The primary structure comprises 206 residues: RNA-free ribonuclease P (206 aa).

Residues 187 to 206 form a disordered region; that stretch reads NLAGDDPGHAPPCGPDQPAG. Residues 195–206 are compositionally biased toward pro residues; the sequence is HAPPCGPDQPAG.

Belongs to the HARP family.

It carries out the reaction Endonucleolytic cleavage of RNA, removing 5'-extranucleotides from tRNA precursor.. Functionally, RNA-free RNase P that catalyzes the removal of the 5'-leader sequence from pre-tRNA to produce the mature 5'-terminus. The sequence is that of RNA-free ribonuclease P from Halorhodospira halophila (strain DSM 244 / SL1) (Ectothiorhodospira halophila (strain DSM 244 / SL1)).